A 583-amino-acid chain; its full sequence is Aspartate--tRNA(Asp/Asn) ligase (583 aa).

Glu-173 contributes to the L-aspartate binding site. An aspartate region spans residues 197–200 (QMFK). Arg-219 lines the L-aspartate pocket. Residues 219–221 (RDE) and Gln-228 contribute to the ATP site. His-447 serves as a coordination point for L-aspartate. Glu-481 is an ATP binding site. Arg-488 contributes to the L-aspartate binding site. 533 to 536 (GLDR) is an ATP binding site.

The protein belongs to the class-II aminoacyl-tRNA synthetase family. Type 1 subfamily. Homodimer.

It is found in the cytoplasm. It carries out the reaction tRNA(Asx) + L-aspartate + ATP = L-aspartyl-tRNA(Asx) + AMP + diphosphate. In terms of biological role, aspartyl-tRNA synthetase with relaxed tRNA specificity since it is able to aspartylate not only its cognate tRNA(Asp) but also tRNA(Asn). Reaction proceeds in two steps: L-aspartate is first activated by ATP to form Asp-AMP and then transferred to the acceptor end of tRNA(Asp/Asn). This Elusimicrobium minutum (strain Pei191) protein is Aspartate--tRNA(Asp/Asn) ligase.